A 433-amino-acid chain; its full sequence is ATP-dependent protease ATPase subunit HslU (433 aa).

Residues Val-18, 60-65 (GVGKTE), Asp-246, Glu-311, and Arg-383 each bind ATP.

The protein belongs to the ClpX chaperone family. HslU subfamily. As to quaternary structure, a double ring-shaped homohexamer of HslV is capped on each side by a ring-shaped HslU homohexamer. The assembly of the HslU/HslV complex is dependent on binding of ATP.

The protein localises to the cytoplasm. Its function is as follows. ATPase subunit of a proteasome-like degradation complex; this subunit has chaperone activity. The binding of ATP and its subsequent hydrolysis by HslU are essential for unfolding of protein substrates subsequently hydrolyzed by HslV. HslU recognizes the N-terminal part of its protein substrates and unfolds these before they are guided to HslV for hydrolysis. The sequence is that of ATP-dependent protease ATPase subunit HslU from Rhodopseudomonas palustris (strain ATCC BAA-98 / CGA009).